A 708-amino-acid polypeptide reads, in one-letter code: Lactotransferrin (708 aa).

A signal peptide spans 1–19 (MKLFFPALLSLGALGLCLA). 2 consecutive Transferrin-like domains span residues 25-352 (VRWC…GLRE) and 364-693 (VVWC…KLRR). 2 disulfides stabilise this stretch: C28–C64 and C38–C55. Residues 44–51 (RMKKVRGP) are interaction with E.coli ompC. Residue D79 participates in Fe(3+) binding. K92 is an active-site residue. Y111 is a Fe(3+) binding site. Disulfide bonds link C134-C217, C176-C192, C179-C202, C189-C200, and C250-C264. Hydrogencarbonate contacts are provided by T136, R140, A142, and G143. Residue Y211 participates in Fe(3+) binding. Residue N252 is glycosylated (N-linked (GlcNAc...) asparagine). H272 provides a ligand contact to Fe(3+). S278 acts as the Nucleophile in catalysis. Cystine bridges form between C367-C399 and C377-C390. N385 is a glycosylation site (N-linked (GlcNAc...) asparagine). Positions 414 and 452 each coordinate Fe(3+). Disulfide bonds link C424–C703, C444–C666, C476–C551, C500–C694, C510–C524, C521–C534, C592–C606, and C644–C649. T478, R482, A484, and G485 together coordinate hydrogencarbonate. N537 carries N-linked (GlcNAc...) asparagine glycosylation. Y545 provides a ligand contact to Fe(3+). An N-linked (GlcNAc...) asparagine glycan is attached at N594. H614 serves as a coordination point for Fe(3+).

This sequence belongs to the transferrin family. In terms of assembly, monomer. Found in a complex with LTF, CLU, EPPIN and SEMG1. Interacts with E.coli outer membrane protein C (OmpC). Found in a complex with MPO and LTF; interacts directly with CP, allows Fe(3+) incorporation into LTF and activation of CP ferroxidase activity. In terms of processing, poly-N-acetyllactosaminic carbohydrate moiety seems to be needed for TLR4 activation.

The protein resides in the secreted. Its subcellular location is the cytoplasmic granule. In terms of biological role, transferrins are iron binding transport proteins which can bind two Fe(3+) ions in association with the binding of an anion, usually bicarbonate. Major iron-binding and multifunctional protein found in exocrine fluids such as breast milk and mucosal secretions. Has antimicrobial activity, which depends on the extracellular cation concentration. Antimicrobial properties include bacteriostasis, which is related to its ability to sequester free iron and thus inhibit microbial growth, as well as direct bactericidal properties leading to the release of lipopolysaccharides from the bacterial outer membrane. Can also prevent bacterial biofilm development in P.aeruginosa infection. Has weak antifungal activity against C.albicans. Has anabolic, differentiating and anti-apoptotic effects on osteoblasts and can also inhibit osteoclastogenesis, possibly playing a role in the regulation of bone growth. Promotes binding of species C adenoviruses to epithelial cells, promoting adenovirus infection. Can inhibit papillomavirus infections. Stimulates the TLR4 signaling pathway leading to NF-kappa-B activation and subsequent pro-inflammatory cytokine production while also interfering with the lipopolysaccharide (LPS)-stimulated TLR4 signaling. Inhibits neutrophil granulocyte migration to sites of apoptosis, when secreted by apoptotic cells. Stimulates VEGFA-mediated endothelial cell migration and proliferation. Binds heparin, chondroitin sulfate and possibly other glycosaminoglycans (GAGs). Also binds specifically to pneumococcal surface protein A (PspA), the lipid A portion of bacterial lipopolysaccharide (LPS), lysozyme and DNA. Its function is as follows. Lactoferricin binds to the bacterial surface and is crucial for the bactericidal functions. Has some antiviral activity against papillomavirus infection. N-terminal region shows strong antifungal activity against C.albicans. Contains two BBXB heparin-binding consensus sequences that appear to form the predominate functional GAG-binding site. Functionally, the lactotransferrin transferrin-like domain 1 functions as a serine protease of the peptidase S60 family that cuts arginine rich regions. This function contributes to the antimicrobial activity. Shows a preferential cleavage at -Arg-Ser-Arg-Arg-|- and -Arg-Arg-Ser-Arg-|-, and of Z-Phe-Arg-|-aminomethylcoumarin sites. This is Lactotransferrin (LTF) from Camelus dromedarius (Dromedary).